Reading from the N-terminus, the 454-residue chain is Tetrahydroanabasine acetyltransferase (454 aa).

Residues His164 and Asp389 each act as proton acceptor in the active site.

It belongs to the plant acyltransferase family. As to quaternary structure, monomer.

The catalysed reaction is tetrahydroanabasine + acetyl-CoA = ammodendrine + CoA. It functions in the pathway alkaloid biosynthesis. Its function is as follows. Tetrahydroanabasine acetyltransferase involved in the accumulation of quinolizidine type antinutritional alkaloids (QAs) natural products. QAs impart a bitter taste to plants, acting as repellents and toxicants for herbivores and predators, and possess a variety of pharmacological effects, including sedative, anticonvulsant, anti-inflammatory, antiviral, antitumor, antipyretic, anti-hepatitis B, antifibrotic, antiallergic, antidiarrheal, analgesic and antimicrobial activities. Mediates the conversion of tetrahydroanabasine into ammodendrine. In Lupinus albus (White lupine), this protein is Tetrahydroanabasine acetyltransferase.